Consider the following 275-residue polypeptide: Ribosomal RNA small subunit methyltransferase A (275 aa).

S-adenosyl-L-methionine is bound by residues Asn-19, Leu-21, Gly-46, Glu-71, Asp-94, and Asn-117.

It belongs to the class I-like SAM-binding methyltransferase superfamily. rRNA adenine N(6)-methyltransferase family. RsmA subfamily.

It localises to the cytoplasm. It carries out the reaction adenosine(1518)/adenosine(1519) in 16S rRNA + 4 S-adenosyl-L-methionine = N(6)-dimethyladenosine(1518)/N(6)-dimethyladenosine(1519) in 16S rRNA + 4 S-adenosyl-L-homocysteine + 4 H(+). Its function is as follows. Specifically dimethylates two adjacent adenosines (A1518 and A1519) in the loop of a conserved hairpin near the 3'-end of 16S rRNA in the 30S particle. May play a critical role in biogenesis of 30S subunits. This is Ribosomal RNA small subunit methyltransferase A from Burkholderia mallei (strain NCTC 10247).